Here is a 178-residue protein sequence, read N- to C-terminus: GPI mannosyltransferase 2 subunit C167.09 (178 aa).

The signal sequence occupies residues 1–20; the sequence is MREFRLIFVLLFFLPSFAIA. The Lumenal segment spans residues 21–152; sequence NTEIINVETG…LGFLPKSVLP (132 aa). N-linked (GlcNAc...) asparagine glycosylation is found at N48, N49, N106, N115, and N122. Residues 153–173 form a helical membrane-spanning segment; the sequence is IVGFVFVIILIALICMTNLFI. At 174–178 the chain is on the cytoplasmic side; that stretch reads KHKRD.

As to quaternary structure, part of the GPI mannosyltransferase 2 complex composed of gpi18 and C167.09.

Its subcellular location is the endoplasmic reticulum membrane. It functions in the pathway glycolipid biosynthesis; glycosylphosphatidylinositol-anchor biosynthesis. Essential component of the GPI mannosyltransferase 2 complex. Responsible for the transfer of the second mannose to the glycosylphosphatidylinositol during GPI precursor assembly. In Schizosaccharomyces pombe (strain 972 / ATCC 24843) (Fission yeast), this protein is GPI mannosyltransferase 2 subunit C167.09.